The sequence spans 328 residues: Transcriptional regulator protein Pur-beta-B (328 aa).

3 disordered regions span residues 1–35 (MADGDSGSERGGSSGGPSGFSQHMSREQETQELAS), 100–124 (SPEQIAQASGEDGAGGPGGPRRALK), and 289–328 (QERQRDKMYDRRGPGERGGSLGPGAGGGGDDSETEDVDDD). Ala2 carries the post-translational modification N-acetylalanine. A compositionally biased stretch (gly residues) spans 9–18 (ERGGSSGGPS). The segment covering 24–35 (MSREQETQELAS) has biased composition (basic and acidic residues). The tract at residues 27–260 (EQETQELASK…LRVSEVKPSY (234 aa)) is DNA-binding. Positions 289 to 303 (QERQRDKMYDRRGPG) are enriched in basic and acidic residues. Gly residues predominate over residues 304–317 (ERGGSLGPGAGGGG). The segment covering 318-328 (DDSETEDVDDD) has biased composition (acidic residues).

Belongs to the PUR DNA-binding protein family.

The protein resides in the nucleus. Transcriptional regulator which can act as an activator or a repressor. The protein is Transcriptional regulator protein Pur-beta-B (purb-b) of Xenopus laevis (African clawed frog).